We begin with the raw amino-acid sequence, 251 residues long: Flap endonuclease Xni (251 aa).

Aspartate 104 serves as a coordination point for Mg(2+). Positions 160-248 (VSPQQLSDYW…ALTGNLQQLR (89 aa)) constitute a 5'-3' exonuclease domain. Leucine 171, alanine 172, proline 180, valine 182, and isoleucine 185 together coordinate K(+). The interval 184–189 (GIGPKT) is interaction with DNA.

Belongs to the Xni family. The cofactor is Mg(2+). K(+) serves as cofactor.

Its function is as follows. Has flap endonuclease activity. During DNA replication, flap endonucleases cleave the 5'-overhanging flap structure that is generated by displacement synthesis when DNA polymerase encounters the 5'-end of a downstream Okazaki fragment. The sequence is that of Flap endonuclease Xni from Serratia proteamaculans (strain 568).